Here is a 120-residue protein sequence, read N- to C-terminus: MVQRLTYRRRHSYATKSNQHRVVKTPGGKLVYQTTKKRASGPKCPVTGKRIQGIPHLRPTEYKRSRLSRNRRTVNRAYGGVLSGGAVRERIIRAFLVEEQKIVKKVLKIQKTKEKQAAKN.

Belongs to the eukaryotic ribosomal protein eL34 family.

This Pisum sativum (Garden pea) protein is Large ribosomal subunit protein eL34 (RPL34).